Here is a 115-residue protein sequence, read N- to C-terminus: Protein translation factor SUI1 homolog (115 aa).

It belongs to the SUI1 family.

Probably involved in translation. This chain is Protein translation factor SUI1 homolog, found in Sporobolus stapfianus (Ressurection grass).